A 37-amino-acid polypeptide reads, in one-letter code: M-oxotoxin-Ot2a (37 aa).

Expressed by the venom gland.

The protein localises to the secreted. Disrupts biological membranes, particularly those rich in phosphocholine. Has antimicrobial activity against Gram-negative bacterium E.coli, Gram-positive bacteria B.subtilis and S.aureus, and hemolytic activity against sheep, pig and guinea pig red blood cells. Has insecticidal activity against S.frugiperda ovarian cells by opening non-selective ion channels. Enhances the insecticidal activity of spider venom neurotoxic peptides. This Oxyopes takobius (Lynx spider) protein is M-oxotoxin-Ot2a.